The following is a 210-amino-acid chain: MDNDKHLKGTTTVGIVCSDGVVLATEKRATMGNFIASKTAKKIYQIDDLVGMTTAGSVGDAQQLVRMISVESKLYKMRRQESITIKGLTTLLSNILGGQRYFPLMVQLLVGGVDKNGPAIFSLDAMGGNIEETKAVATGSGSPMAYGVLEDRYHEGINVDEGMELAVRALYNAMKRDSASGNGIDVVKITADGYKRIETGEVDKILENLK.

Residues Met-1 to Gly-9 constitute a propeptide, removed in mature form; by autocatalysis. The Nucleophile role is filled by Thr-10.

This sequence belongs to the peptidase T1B family. As to quaternary structure, the 20S proteasome core is composed of 14 alpha and 14 beta subunits that assemble into four stacked heptameric rings, resulting in a barrel-shaped structure. The two inner rings, each composed of seven catalytic beta subunits, are sandwiched by two outer rings, each composed of seven alpha subunits. The catalytic chamber with the active sites is on the inside of the barrel. Has a gated structure, the ends of the cylinder being occluded by the N-termini of the alpha-subunits. Is capped at one or both ends by the proteasome regulatory ATPase, PAN.

It localises to the cytoplasm. It carries out the reaction Cleavage of peptide bonds with very broad specificity.. With respect to regulation, the formation of the proteasomal ATPase PAN-20S proteasome complex, via the docking of the C-termini of PAN into the intersubunit pockets in the alpha-rings, triggers opening of the gate for substrate entry. Interconversion between the open-gate and close-gate conformations leads to a dynamic regulation of the 20S proteasome proteolysis activity. In terms of biological role, component of the proteasome core, a large protease complex with broad specificity involved in protein degradation. This Methanohalophilus mahii (strain ATCC 35705 / DSM 5219 / SLP) protein is Proteasome subunit beta.